Reading from the N-terminus, the 671-residue chain is TBC1 domain family member 15 (671 aa).

Ala-2 is subject to N-acetylalanine. Ser-23, Ser-32, Ser-70, Ser-205, and Ser-257 each carry phosphoserine. Residues 329-539 (GLSHSLRKQA…RLWEVMWTEL (211 aa)) enclose the Rab-GAP TBC domain. Phosphoserine is present on residues Ser-623 and Ser-655. Residues 650 to 671 (EAKDDSPTQTLASPNACRLTPA) are disordered. Thr-669 is modified (phosphothreonine).

Interacts with non-phosphorylated form of RAB8A; phosphorylation of RAB8A at 'Thr-72' disrupts this interaction. Interacts with ARMC12. In terms of tissue distribution, ubiquitous, with highest expression in heart, liver and testis and lower expression in brain, spleen, lung, kidney and skeletal muscle.

It is found in the cytoplasm. Its function is as follows. Acts as a GTPase activating protein for RAB7A. Does not act on RAB4, RAB5 or RAB6. The polypeptide is TBC1 domain family member 15 (Tbc1d15) (Mus musculus (Mouse)).